A 345-amino-acid polypeptide reads, in one-letter code: GTPase Obg (345 aa).

Positions methionine 1–leucine 159 constitute an Obg domain. The tract at residues glycine 121–glycine 142 is disordered. The OBG-type G domain maps to alanine 160–glycine 327. GTP is bound by residues glycine 166–serine 173, phenylalanine 191–arginine 195, aspartate 212–glycine 215, asparagine 279–aspartate 282, and serine 308–alanine 310. Serine 173 and threonine 193 together coordinate Mg(2+).

It belongs to the TRAFAC class OBG-HflX-like GTPase superfamily. OBG GTPase family. Monomer. It depends on Mg(2+) as a cofactor.

The protein localises to the cytoplasm. In terms of biological role, an essential GTPase which binds GTP, GDP and possibly (p)ppGpp with moderate affinity, with high nucleotide exchange rates and a fairly low GTP hydrolysis rate. Plays a role in control of the cell cycle, stress response, ribosome biogenesis and in those bacteria that undergo differentiation, in morphogenesis control. The sequence is that of GTPase Obg from Rhizorhabdus wittichii (strain DSM 6014 / CCUG 31198 / JCM 15750 / NBRC 105917 / EY 4224 / RW1) (Sphingomonas wittichii).